A 345-amino-acid polypeptide reads, in one-letter code: Uroporphyrinogen decarboxylase (345 aa).

Substrate is bound by residues 27–31 (RQAGR), Phe-46, Asp-76, Tyr-152, Ser-207, and His-320.

It belongs to the uroporphyrinogen decarboxylase family. As to quaternary structure, homodimer.

It is found in the cytoplasm. It carries out the reaction uroporphyrinogen III + 4 H(+) = coproporphyrinogen III + 4 CO2. The protein operates within porphyrin-containing compound metabolism; protoporphyrin-IX biosynthesis; coproporphyrinogen-III from 5-aminolevulinate: step 4/4. In terms of biological role, catalyzes the decarboxylation of four acetate groups of uroporphyrinogen-III to yield coproporphyrinogen-III. This is Uroporphyrinogen decarboxylase from Geobacillus sp. (strain WCH70).